We begin with the raw amino-acid sequence, 458 residues long: Ammonium transporter Rh type B (458 aa).

Residues 1–13 (MAGSPSRAAGRRL) are Cytoplasmic-facing. A helical membrane pass occupies residues 14–34 (QLPLLCLFLQGATAVLFAVFV). The Extracellular portion of the chain corresponds to 35-61 (RYNHKTDAALWHRGNYSNADNEFYFRY). An N-linked (GlcNAc...) asparagine glycan is attached at N49. Residues 62–82 (PSFQDVHAMVFVGFGFLMVFL) traverse the membrane as a helical segment. Over 83-86 (QRYG) the chain is Cytoplasmic. The helical transmembrane segment at 87–107 (FSSVGFTFLLAAFALQWSTLV) threads the bilayer. Residues 108–124 (QGFLHSFHSGHIHVGVE) are Extracellular-facing. The chain crosses the membrane as a helical span at residues 125–145 (SMINADFCAGAVLISFGAVLG). Residues 146–149 (KTGP) lie on the Cytoplasmic side of the membrane. Residues 150 to 170 (AQLLLMALLEVVLFGINEFVL) form a helical membrane-spanning segment. The Extracellular portion of the chain corresponds to 171–178 (LHLLGVRD). Residues 179–201 (AGGSMTIHTFGAYFGLVLSRVLY) traverse the membrane as a helical segment. The Cytoplasmic portion of the chain corresponds to 202–219 (RPQLEKSKHRQGSVYHSD). Residues 220–240 (LFAMIGTIFLWIFWPSFNSAL) traverse the membrane as a helical segment. Over 241–251 (TALGAGQHRTA) the chain is Extracellular. A helical transmembrane segment spans residues 252–272 (LNTYYSLAASTLGTFALSALV). Over 273-282 (GEDGRLDMVH) the chain is Cytoplasmic. The helical transmembrane segment at 283 to 303 (IQNAALAGGVVVGTSSEMMLT) threads the bilayer. A topological domain (extracellular) is located at residue P304. A helical transmembrane segment spans residues 305–325 (FGALAAGFLAGTVSTLGYKFF). Over 326-346 (TPILESKFKVQDTCGVHNLHG) the chain is Cytoplasmic. The helical transmembrane segment at 347–367 (MPGVLGALLGVLVAGLATHEA) threads the bilayer. Residues 368–393 (YGDGLESVFPLIAEGQRSATSQAMLQ) lie on the Extracellular side of the membrane. Residues 394–414 (LFGLFVTLMFASVGGGLGGLL) traverse the membrane as a helical segment. Residues 415-458 (LKLPFLDSPPDSQCYEDQVHWQVPGEHEDEAQRPLRVEEADTQA) lie on the Cytoplasmic side of the membrane. The tract at residues 416 to 424 (KLPFLDSPP) is interaction with ANK3. Residues 429–432 (YEDQ) carry the Basolateral sorting signal motif. The disordered stretch occupies residues 439-458 (GEHEDEAQRPLRVEEADTQA). Residues 444–458 (EAQRPLRVEEADTQA) are compositionally biased toward basic and acidic residues.

It belongs to the ammonium transporter (TC 2.A.49) family. Rh subfamily. As to quaternary structure, interacts (via C-terminus) with ANK2 and ANK3; required for targeting to the basolateral membrane. N-glycosylated.

Its subcellular location is the cell membrane. It localises to the basolateral cell membrane. The catalysed reaction is NH4(+)(in) = NH4(+)(out). The enzyme catalyses methylamine(out) = methylamine(in). It carries out the reaction CO2(out) = CO2(in). Its function is as follows. Ammonium transporter involved in the maintenance of acid-base homeostasis. Transports ammonium and its related derivative methylammonium across the basolateral plasma membrane of epithelial cells likely contributing to renal transepithelial ammonia transport and ammonia metabolism. May transport either NH4(+) or NH3 ammonia species predominantly mediating an electrogenic NH4(+) transport. May act as a CO2 channel providing for renal acid secretion. The chain is Ammonium transporter Rh type B (RHBG) from Papio hamadryas (Hamadryas baboon).